The sequence spans 729 residues: Pentatricopeptide repeat-containing protein At4g04370 (729 aa).

PPR repeat units lie at residues 10-44 (STKYFNSHINHLSSHGDHKQVLSTFSSMLANKLLP), 45-79 (DTFTFPSLLKACASLQRLSFGLSIHQQVLVNGFSS), 80-110 (DFYISSSLVNLYAKFGLLAHARKVFEEMRER), 111-145 (DVVHWTAMIGCYSRAGIVGEACSLVNEMRFQGIKP), 178-208 (DIAVMNSMLNLYCKCDHVGDAKDLFDQMEQR), 209-243 (DMVSWNTMISGYASVGNMSEILKLLYRMRGDGLRP), 244-278 (DQQTFGASLSVSGTMCDLEMGRMLHCQIVKTGFDV), 279-309 (DMHLKTALITMYLKCGKEEASYRVLETIPNK), 310-344 (DVVCWTVMISGLMRLGRAEKALIVFSEMLQSGSDL), 345-379 (SSEAIASVVASCAQLGSFDLGASVHGYVLRHGYTL), 380-414 (DTPALNSLITMYAKCGHLDKSLVIFERMNERDLVS), 415-445 (WNAIISGYAQNVDLCKALLLFEEMKFKTVQQ), 447-481 (DSFTVVSLLQACSSAGALPVGKLIHCIVIRSFIRP), 482-512 (CSLVDTALVDMYSKCGYLEAAQRCFDSISWK), 513-547 (DVVSWGILIAGYGFHGKGDIALEIYSEFLHSGMEP), 548-583 (NHVIFLAVLSSCSHNGMVQQGLKIFSSMVRDFGVEP), and 584-618 (NHEHLACVVDLLCRAKRIEDAFKFYKENFTRPSID). Residues 619 to 694 (VLGIILDACR…LPGWSKIEMN (76 aa)) are type E motif. The tract at residues 695-723 (GKTTTFFMNHTSHSDDTVSLLKLLSREMM) is type E(+) motif.

The protein belongs to the PPR family. PCMP-E subfamily.

The sequence is that of Pentatricopeptide repeat-containing protein At4g04370 (PCMP-E99) from Arabidopsis thaliana (Mouse-ear cress).